Consider the following 515-residue polypeptide: Aldehyde dehydrogenase tropH (515 aa).

238 to 243 lines the NAD(+) pocket; it reads GSVATG. Residue glutamate 260 is the Proton acceptor of the active site. The active-site Nucleophile is the cysteine 295.

The protein belongs to the aldehyde dehydrogenase family.

The catalysed reaction is an aldehyde + NAD(+) + H2O = a carboxylate + NADH + 2 H(+). The protein operates within secondary metabolite biosynthesis. Its function is as follows. Aldehyde dehydrogenase; part of the gene cluster that mediates the biosynthesis of the tropolone class of fungal maleic anhydrides. The pathway begins with the synthesis of 3-methylorcinaldehyde by the non-reducing polyketide synthase (PKS) tropA. 3-methylorcinaldehyde is the substrate for the FAD-dependent monooxygenase tropB to yield a dearomatized hydroxycyclohexadione. The 2-oxoglutarate-dependent dioxygenase tropC then performs the oxidative ring expansion to provide the first tropolone metabolite stipitaldehyde. Trop D converts stipitaldehyde into stipitacetal which is in turn converted to stipitalide by the short-chain dehydrogenase/reductase tropE. The next steps involve tropF, tropG, tropH, tropI and tropJ to form successive tropolone maleic anhydrides including stipitaldehydic, stipitatonic and stipitatic acids. This is Aldehyde dehydrogenase tropH from Talaromyces stipitatus (strain ATCC 10500 / CBS 375.48 / QM 6759 / NRRL 1006) (Penicillium stipitatum).